The chain runs to 200 residues: Large ribosomal subunit protein uL22c (200 aa).

The protein belongs to the universal ribosomal protein uL22 family. In terms of assembly, part of the 50S ribosomal subunit.

The protein resides in the plastid. It localises to the chloroplast. Its function is as follows. This protein binds specifically to 23S rRNA. The globular domain of the protein is located near the polypeptide exit tunnel on the outside of the subunit, while an extended beta-hairpin is found that lines the wall of the exit tunnel in the center of the 70S ribosome. The sequence is that of Large ribosomal subunit protein uL22c (rpl22) from Medicago sativa (Alfalfa).